Reading from the N-terminus, the 501-residue chain is Aldehyde dehydrogenase, cytosolic 1 (501 aa).

An N-acetylserine modification is found at serine 2. Residues lysine 91 and lysine 128 each carry the N6-acetyllysine modification. Position 246-251 (246-251) interacts with NAD(+); it reads GSTEVG. At lysine 252 the chain carries N6-acetyllysine. The Proton acceptor role is filled by glutamate 269. The Nucleophile role is filled by cysteine 303. N6-acetyllysine occurs at positions 353, 367, and 410. Serine 413 carries the post-translational modification Phosphoserine. An N6-acetyllysine mark is found at lysine 419, lysine 435, and lysine 495.

The protein belongs to the aldehyde dehydrogenase family. Homotetramer. In terms of tissue distribution, very low levels in lung and liver.

It is found in the cytoplasm. The catalysed reaction is an aldehyde + NAD(+) + H2O = a carboxylate + NADH + 2 H(+). It functions in the pathway alcohol metabolism; ethanol degradation; acetate from ethanol: step 2/2. Functionally, can oxidize benzaldehyde, propionaldehyde and acetaldehyde. No detectable activity with retinal. This chain is Aldehyde dehydrogenase, cytosolic 1 (Aldh1a7), found in Rattus norvegicus (Rat).